The sequence spans 594 residues: Protein CBFA2T2 (594 aa).

Position 24 is a phosphoserine (Ser-24). Residue Lys-29 forms a Glycyl lysine isopeptide (Lys-Gly) (interchain with G-Cter in SUMO2) linkage. The tract at residues 48-96 is disordered; that stretch reads GGPRPVSFTPTALSNGINHSPPTLNGAPSPPQRFSNGPASSTSSALTNQ. 2 stretches are compositionally biased toward polar residues: residues 55–70 and 79–96; these read FTPTALSNGINHSPPT and QRFSNGPASSTSSALTNQ. Residues 98–206 are interaction with PRDM14; the sequence is LPATCGARQL…QHEHLLLNTS (109 aa). The 96-residue stretch at 104 to 199 folds into the TAFH domain; that stretch reads ARQLSKLKRF…TPSQYLAQHE (96 aa). Positions 220–257 are disordered; the sequence is VHGNGKRPSPERRDENNFERDTVPPEPPAKRVCTISPA. The segment covering 227-242 has biased composition (basic and acidic residues); sequence PSPERRDENNFERDTV. Ser-255 is subject to Phosphoserine. The nervy homology region 2 (NHR2) stretch occupies residues 322 to 368; sequence QDELVDHRLTEREWADEWKHLDHALNCIMEMVEKTRRSMAVLRRCQE. A disordered region spans residues 388 to 416; that stretch reads RKTGTELVSRQHSPGSTDSLSNDSQREFT. Positions 393–410 are enriched in polar residues; the sequence is ELVSRQHSPGSTDSLSND. Phosphoserine is present on Ser-400. Positions 426–475 are nervy homology region 3 (NHR3); that stretch reads VEFWKKTEEAVNKVKIQAMSEVQKAVAEAEQKAFEVIATERARMEQTIAD. Residue Lys-440 forms a Glycyl lysine isopeptide (Lys-Gly) (interchain with G-Cter in SUMO2) linkage. Residues 442 to 482 are a coiled coil; that stretch reads QAMSEVQKAVAEAEQKAFEVIATERARMEQTIADVKRQAAE. Residues Cys-498, Cys-501, Cys-509, Cys-512, Cys-518, Cys-522, His-530, and Cys-534 each contribute to the Zn(2+) site. The MYND-type zinc finger occupies 498 to 534; the sequence is CWNCGRKASETCSGCNIARYCGSFCQHKDWERHHRLC. The tract at residues 538-594 is disordered; sequence LHGHSPHSQSRPLLPGGRGSARSADCSVPSPALDKTSATTSRSSTPASVTAIDANGL. Position 567 is a phosphoserine (Ser-567). Residues 573–588 are compositionally biased toward low complexity; sequence TSATTSRSSTPASVTA.

This sequence belongs to the CBFA2T family. Homooligomer. Homotetramerization is mediated by the NHR2 domain. Interacts with CBFA2T3/MTG16. Can interact with RUNX1T1/CBFA2T1. Heterotetramerization between members of the CBFA2T family is proposed. Interacts with RBP, GFI1, TCF4, PRDM14. Interacts with TAL1 and CBFA2T3/MTG16; the heteromer with CBFA2T3/MTG16 may function in repression of TAL1. In terms of tissue distribution, expressed in embryonic stem cells.

The protein resides in the nucleus. Its function is as follows. Transcriptional corepressor which facilitates transcriptional repression via its association with DNA-binding transcription factors and recruitment of other corepressors and histone-modifying enzymes. Via association with PRDM14 is involved in regulation of embryonic stem cell (ESC) pluripotency. Involved in primordial germ cell (PCG) formation. Stabilizes PRDM14 and OCT4 on chromatin in a homooligomerization-dependent mannerCan repress the expression of MMP7 in a ZBTB33-dependent manner. Through heteromerization with CBFA2T3/MTG16 may be involved in regulation of the proliferation and the differentiation of erythroid progenitors by repressing the expression of TAL1 target genes. Required for the maintenance of the secretory cell lineage in the small intestine. Can inhibit Notch signaling probably by association with RBPJ and may be involved in GFI1-mediated Paneth cell differentiation. The protein is Protein CBFA2T2 (Cbfa2t2) of Mus musculus (Mouse).